We begin with the raw amino-acid sequence, 335 residues long: Holliday junction branch migration complex subunit RuvB (335 aa).

The interval 1 to 181 (MDRIVEIEKY…FGMQFRLEFY (181 aa)) is large ATPase domain (RuvB-L). Residue Leu-20 coordinates ATP. ADP-binding residues include Arg-21, Tyr-28, Ile-29, Gly-62, Leu-63, Gly-64, Lys-65, Thr-66, and Thr-67. ATP-binding positions include 128-130 (EDY) and Arg-171. 2 residues coordinate ADP: Tyr-181 and Arg-218. The tract at residues 182 to 252 (KDSELALILQ…RANEALNSLG (71 aa)) is small ATPAse domain (RuvB-S). The head domain (RuvB-H) stretch occupies residues 255–335 (ELGFDAMDLR…LNYEKTLFEE (81 aa)). DNA-binding residues include Arg-309 and Arg-314.

The protein belongs to the RuvB family. Homohexamer. Forms an RuvA(8)-RuvB(12)-Holliday junction (HJ) complex. HJ DNA is sandwiched between 2 RuvA tetramers; dsDNA enters through RuvA and exits via RuvB. An RuvB hexamer assembles on each DNA strand where it exits the tetramer. Each RuvB hexamer is contacted by two RuvA subunits (via domain III) on 2 adjacent RuvB subunits; this complex drives branch migration. In the full resolvosome a probable DNA-RuvA(4)-RuvB(12)-RuvC(2) complex forms which resolves the HJ.

It is found in the cytoplasm. The catalysed reaction is ATP + H2O = ADP + phosphate + H(+). In terms of biological role, the RuvA-RuvB-RuvC complex processes Holliday junction (HJ) DNA during genetic recombination and DNA repair, while the RuvA-RuvB complex plays an important role in the rescue of blocked DNA replication forks via replication fork reversal (RFR). RuvA specifically binds to HJ cruciform DNA, conferring on it an open structure. The RuvB hexamer acts as an ATP-dependent pump, pulling dsDNA into and through the RuvAB complex. RuvB forms 2 homohexamers on either side of HJ DNA bound by 1 or 2 RuvA tetramers; 4 subunits per hexamer contact DNA at a time. Coordinated motions by a converter formed by DNA-disengaged RuvB subunits stimulates ATP hydrolysis and nucleotide exchange. Immobilization of the converter enables RuvB to convert the ATP-contained energy into a lever motion, pulling 2 nucleotides of DNA out of the RuvA tetramer per ATP hydrolyzed, thus driving DNA branch migration. The RuvB motors rotate together with the DNA substrate, which together with the progressing nucleotide cycle form the mechanistic basis for DNA recombination by continuous HJ branch migration. Branch migration allows RuvC to scan DNA until it finds its consensus sequence, where it cleaves and resolves cruciform DNA. The protein is Holliday junction branch migration complex subunit RuvB of Campylobacter jejuni subsp. jejuni serotype O:2 (strain ATCC 700819 / NCTC 11168).